A 283-amino-acid polypeptide reads, in one-letter code: Adenosyl-chloride synthase (283 aa).

Substrate-binding positions include D11, 70–72, and 128–131; these read YVY and TWYG. Position 131 (G131) interacts with chloride.

The protein belongs to the SAM hydrolase / SAM-dependent halogenase family. Homotrimer.

The enzyme catalyses chloride + S-adenosyl-L-methionine = 5'-chloro-5'-deoxyadenosine + L-methionine. Functionally, involved in the biosynthesis of the proteosome inhibitor salinosporamide A (SalA). Catalyzes the halogenation of S-adenosyl-L-methionine (SAM) with chloride to generate 5'-chloro-5'-deoxyadenosine (5'-CIDA) and L-methionine. It can also use bromide and iodide, producing halogenated 5'-deoxyadenosine (5'-XDA) and L-methionine, however no halogenase activity is detected in the presence of fluoride. This is Adenosyl-chloride synthase from Salinispora tropica (strain ATCC BAA-916 / DSM 44818 / JCM 13857 / NBRC 105044 / CNB-440).